A 251-amino-acid chain; its full sequence is Ribosomal RNA small subunit methyltransferase J (251 aa).

S-adenosyl-L-methionine is bound by residues 100 to 101, 116 to 117, and D170; these read RD and ER.

This sequence belongs to the methyltransferase superfamily. RsmJ family.

The protein resides in the cytoplasm. The enzyme catalyses guanosine(1516) in 16S rRNA + S-adenosyl-L-methionine = N(2)-methylguanosine(1516) in 16S rRNA + S-adenosyl-L-homocysteine + H(+). Its function is as follows. Specifically methylates the guanosine in position 1516 of 16S rRNA. The sequence is that of Ribosomal RNA small subunit methyltransferase J from Actinobacillus pleuropneumoniae serotype 5b (strain L20).